The following is a 293-amino-acid chain: Kynurenine formamidase (293 aa).

An HGGXW motif is present at residues 84–88; sequence HGGYW. Residue serine 153 is the Nucleophile of the active site. Active-site residues include aspartate 236 and histidine 268.

The protein belongs to the kynurenine formamidase family. In terms of assembly, homodimer.

The protein localises to the cytoplasm. It localises to the cytosol. It is found in the nucleus. The catalysed reaction is N-formyl-L-kynurenine + H2O = L-kynurenine + formate + H(+). It participates in amino-acid degradation; L-tryptophan degradation via kynurenine pathway; L-kynurenine from L-tryptophan: step 2/2. Functionally, catalyzes the hydrolysis of N-formyl-L-kynurenine to L-kynurenine, the second step in the kynurenine pathway of tryptophan degradation. Kynurenine may be further oxidized to nicotinic acid, NAD(H) and NADP(H). Required for elimination of toxic metabolites. The protein is Kynurenine formamidase (afmid) of Danio rerio (Zebrafish).